The following is a 79-amino-acid chain: Small ribosomal subunit protein bS18 (79 aa).

Belongs to the bacterial ribosomal protein bS18 family. As to quaternary structure, part of the 30S ribosomal subunit. Forms a tight heterodimer with protein bS6.

In terms of biological role, binds as a heterodimer with protein bS6 to the central domain of the 16S rRNA, where it helps stabilize the platform of the 30S subunit. This is Small ribosomal subunit protein bS18 from Onion yellows phytoplasma (strain OY-M).